Consider the following 156-residue polypeptide: MDINMTLVGQLIAFVVFVIFCMKYVWPPIIGAIEDRQATIADGLAASDRAAKDLELAQEKATAQLKEAKVQAASIVDAAKKHEAKIVDEAAGKAQVEKERILASGHAEIETERNRAKEELRKEVAVLAIAGAEKILERSIDAAAHSDILDKLVAEL.

The chain crosses the membrane as a helical span at residues 11 to 31; that stretch reads LIAFVVFVIFCMKYVWPPIIG.

This sequence belongs to the ATPase B chain family. In terms of assembly, F-type ATPases have 2 components, F(1) - the catalytic core - and F(0) - the membrane proton channel. F(1) has five subunits: alpha(3), beta(3), gamma(1), delta(1), epsilon(1). F(0) has three main subunits: a(1), b(2) and c(10-14). The alpha and beta chains form an alternating ring which encloses part of the gamma chain. F(1) is attached to F(0) by a central stalk formed by the gamma and epsilon chains, while a peripheral stalk is formed by the delta and b chains.

It is found in the cell inner membrane. F(1)F(0) ATP synthase produces ATP from ADP in the presence of a proton or sodium gradient. F-type ATPases consist of two structural domains, F(1) containing the extramembraneous catalytic core and F(0) containing the membrane proton channel, linked together by a central stalk and a peripheral stalk. During catalysis, ATP synthesis in the catalytic domain of F(1) is coupled via a rotary mechanism of the central stalk subunits to proton translocation. Functionally, component of the F(0) channel, it forms part of the peripheral stalk, linking F(1) to F(0). The chain is ATP synthase subunit b from Colwellia psychrerythraea (strain 34H / ATCC BAA-681) (Vibrio psychroerythus).